The chain runs to 455 residues: Bifunctional protein GlmU (455 aa).

Positions 1-225 are pyrophosphorylase; it reads MNIVILAAGL…EWETLGVNSK (225 aa). Residues 6–9, Lys-20, Gln-71, 76–77, 98–100, Gly-135, Glu-150, Asn-165, and Asn-223 contribute to the UDP-N-acetyl-alpha-D-glucosamine site; these read LAAG, GT, and YGD. Residue Asp-100 participates in Mg(2+) binding. A Mg(2+)-binding site is contributed by Asn-223. Residues 226 to 246 form a linker region; the sequence is VQLAELERIHQRNLAQQLLED. The segment at 247 to 455 is N-acetyltransferase; sequence GVTLIDPARI…QRPVKQKKDA (209 aa). UDP-N-acetyl-alpha-D-glucosamine contacts are provided by Arg-329 and Lys-347. The Proton acceptor role is filled by His-359. UDP-N-acetyl-alpha-D-glucosamine contacts are provided by Tyr-362 and Asn-373. Acetyl-CoA contacts are provided by residues Ala-376, 382-383, Ser-401, Ala-419, and Arg-436; that span reads NY.

The protein in the N-terminal section; belongs to the N-acetylglucosamine-1-phosphate uridyltransferase family. This sequence in the C-terminal section; belongs to the transferase hexapeptide repeat family. As to quaternary structure, homotrimer. The cofactor is Mg(2+).

The protein resides in the cytoplasm. It carries out the reaction alpha-D-glucosamine 1-phosphate + acetyl-CoA = N-acetyl-alpha-D-glucosamine 1-phosphate + CoA + H(+). It catalyses the reaction N-acetyl-alpha-D-glucosamine 1-phosphate + UTP + H(+) = UDP-N-acetyl-alpha-D-glucosamine + diphosphate. Its pathway is nucleotide-sugar biosynthesis; UDP-N-acetyl-alpha-D-glucosamine biosynthesis; N-acetyl-alpha-D-glucosamine 1-phosphate from alpha-D-glucosamine 6-phosphate (route II): step 2/2. It functions in the pathway nucleotide-sugar biosynthesis; UDP-N-acetyl-alpha-D-glucosamine biosynthesis; UDP-N-acetyl-alpha-D-glucosamine from N-acetyl-alpha-D-glucosamine 1-phosphate: step 1/1. It participates in bacterial outer membrane biogenesis; LPS lipid A biosynthesis. Catalyzes the last two sequential reactions in the de novo biosynthetic pathway for UDP-N-acetylglucosamine (UDP-GlcNAc). The C-terminal domain catalyzes the transfer of acetyl group from acetyl coenzyme A to glucosamine-1-phosphate (GlcN-1-P) to produce N-acetylglucosamine-1-phosphate (GlcNAc-1-P), which is converted into UDP-GlcNAc by the transfer of uridine 5-monophosphate (from uridine 5-triphosphate), a reaction catalyzed by the N-terminal domain. This Ralstonia nicotianae (strain ATCC BAA-1114 / GMI1000) (Ralstonia solanacearum) protein is Bifunctional protein GlmU.